The following is a 172-amino-acid chain: WW domain binding protein VOPP1 (172 aa).

The N-terminal stretch at Met1 to Ala22 is a signal peptide. Residues Lys23–Leu60 lie on the Extracellular side of the membrane. Residues Trp61–Ile81 form a helical membrane-spanning segment. The Cytoplasmic segment spans residues Arg82–Lys172. The interval Gln139–Lys172 is disordered. Over residues Tyr151–Tyr165 the composition is skewed to pro residues.

Belongs to the VOPP1/ECOP family. Interacts with WWOX (via WW domain).

The protein localises to the cytoplasmic vesicle membrane. Its subcellular location is the late endosome membrane. It is found in the lysosome membrane. Its function is as follows. Increases the transcriptional activity of NFKB1 by facilitating its nuclear translocation, DNA-binding and associated apoptotic response, when overexpressed. May sequester WWOX in lysosomal vesicles and thereby regulate WWOX role as tumor suppressor. The polypeptide is WW domain binding protein VOPP1 (Rattus norvegicus (Rat)).